Reading from the N-terminus, the 396-residue chain is Elongation factor Tu 1 (396 aa).

A tr-type G domain is found at 10–206; sequence KPHVNVGTIG…ALDTYIPTPK (197 aa). Residues 19-26 form a G1 region; the sequence is GHVDHGKT. 19–26 lines the GTP pocket; that stretch reads GHVDHGKT. A Mg(2+)-binding site is contributed by Thr-26. A G2 region spans residues 60-64; it reads GITIS. The tract at residues 81-84 is G3; it reads DCPG. Residues 81 to 85 and 136 to 139 each bind GTP; these read DCPGH and NKAD. The interval 136–139 is G4; the sequence is NKAD. Positions 174–176 are G5; the sequence is SAL.

The protein belongs to the TRAFAC class translation factor GTPase superfamily. Classic translation factor GTPase family. EF-Tu/EF-1A subfamily. In terms of assembly, monomer.

The protein resides in the cytoplasm. The catalysed reaction is GTP + H2O = GDP + phosphate + H(+). In terms of biological role, GTP hydrolase that promotes the GTP-dependent binding of aminoacyl-tRNA to the A-site of ribosomes during protein biosynthesis. This is Elongation factor Tu 1 from Ruthia magnifica subsp. Calyptogena magnifica.